The chain runs to 387 residues: ATP phosphoribosyltransferase regulatory subunit (387 aa).

Belongs to the class-II aminoacyl-tRNA synthetase family. HisZ subfamily. Heteromultimer composed of HisG and HisZ subunits.

The protein resides in the cytoplasm. It participates in amino-acid biosynthesis; L-histidine biosynthesis; L-histidine from 5-phospho-alpha-D-ribose 1-diphosphate: step 1/9. In terms of biological role, required for the first step of histidine biosynthesis. May allow the feedback regulation of ATP phosphoribosyltransferase activity by histidine. This chain is ATP phosphoribosyltransferase regulatory subunit, found in Polynucleobacter necessarius subsp. necessarius (strain STIR1).